Consider the following 194-residue polypeptide: FK506-binding protein 3 (194 aa).

The N-terminal stretch at methionine 1–serine 19 is a signal peptide. One can recognise a PPIase FKBP-type domain in the interval glycine 44 to glutamate 133. A helical transmembrane segment spans residues valine 148 to isoleucine 168. The interval aspartate 173–asparagine 194 is disordered. Positions lysine 184–asparagine 194 are enriched in basic residues.

The protein belongs to the FKBP-type PPIase family.

The protein resides in the membrane. The enzyme catalyses [protein]-peptidylproline (omega=180) = [protein]-peptidylproline (omega=0). With respect to regulation, inhibited by both FK506 and rapamycin. Functionally, PPIases accelerate the folding of proteins by catalyzing the cis-trans isomerization of proline imidic peptide bonds in oligopeptides. In Dictyostelium discoideum (Social amoeba), this protein is FK506-binding protein 3 (fkbp3).